The primary structure comprises 20 residues: Dermaseptin-N1 (20 aa).

L20 is modified (leucine amide).

Expressed by the skin glands.

The protein localises to the secreted. In terms of biological role, antimicrobial peptide with moderate activity against both Gram-positive and Gram-negative bacteria, and important activity against Leishmania species (L.amazonensis and L.infantum). Acts on both Leishmania promastigote and amastigote forms. Shows activity against E.coli (MIC=17.8 uM), S.aureus (MIC=32.3 uM) and the phytopathogenic bacterium Xanthomonas axonopodis (MIC=2 uM). Shows low cytotoxicity against mammalian cells in models of peritoneal macrophages. This chain is Dermaseptin-N1, found in Pithecopus nordestinus (Northeastern Brazilian leaf frog).